The following is a 297-amino-acid chain: Probable endonuclease 4 (297 aa).

Zn(2+) is bound by residues His69, His110, Glu145, Asp179, His182, His214, Asp227, His229, and Glu259.

The protein belongs to the AP endonuclease 2 family. Zn(2+) is required as a cofactor.

The enzyme catalyses Endonucleolytic cleavage to 5'-phosphooligonucleotide end-products.. Its function is as follows. Endonuclease IV plays a role in DNA repair. It cleaves phosphodiester bonds at apurinic or apyrimidinic (AP) sites, generating a 3'-hydroxyl group and a 5'-terminal sugar phosphate. In Bacillus subtilis (strain 168), this protein is Probable endonuclease 4.